The following is a 460-amino-acid chain: Cysteine--tRNA ligase (460 aa).

Residue Cys-27 participates in Zn(2+) binding. Positions Pro-29 to Asn-39 match the 'HIGH' region motif. Residues Cys-207, His-232, and Glu-236 each contribute to the Zn(2+) site. The short motif at Lys-264–Ser-268 is the 'KMSKS' region element. Lys-267 contacts ATP.

Belongs to the class-I aminoacyl-tRNA synthetase family. Monomer. The cofactor is Zn(2+).

The protein resides in the cytoplasm. The enzyme catalyses tRNA(Cys) + L-cysteine + ATP = L-cysteinyl-tRNA(Cys) + AMP + diphosphate. The chain is Cysteine--tRNA ligase (cysS) from Thermotoga maritima (strain ATCC 43589 / DSM 3109 / JCM 10099 / NBRC 100826 / MSB8).